Reading from the N-terminus, the 373-residue chain is Anhydro-N-acetylmuramic acid kinase (373 aa).

12–19 serves as a coordination point for ATP; it reads GTSLDGVD.

Belongs to the anhydro-N-acetylmuramic acid kinase family.

It carries out the reaction 1,6-anhydro-N-acetyl-beta-muramate + ATP + H2O = N-acetyl-D-muramate 6-phosphate + ADP + H(+). The protein operates within amino-sugar metabolism; 1,6-anhydro-N-acetylmuramate degradation. It participates in cell wall biogenesis; peptidoglycan recycling. Catalyzes the specific phosphorylation of 1,6-anhydro-N-acetylmuramic acid (anhMurNAc) with the simultaneous cleavage of the 1,6-anhydro ring, generating MurNAc-6-P. Is required for the utilization of anhMurNAc either imported from the medium or derived from its own cell wall murein, and thus plays a role in cell wall recycling. In Salmonella gallinarum (strain 287/91 / NCTC 13346), this protein is Anhydro-N-acetylmuramic acid kinase.